A 292-amino-acid chain; its full sequence is Ribosomal RNA small subunit methyltransferase A (292 aa).

Positions 29, 31, 56, 77, 102, and 127 each coordinate S-adenosyl-L-methionine.

This sequence belongs to the class I-like SAM-binding methyltransferase superfamily. rRNA adenine N(6)-methyltransferase family. RsmA subfamily.

It localises to the cytoplasm. It carries out the reaction adenosine(1518)/adenosine(1519) in 16S rRNA + 4 S-adenosyl-L-methionine = N(6)-dimethyladenosine(1518)/N(6)-dimethyladenosine(1519) in 16S rRNA + 4 S-adenosyl-L-homocysteine + 4 H(+). Functionally, specifically dimethylates two adjacent adenosines (A1518 and A1519) in the loop of a conserved hairpin near the 3'-end of 16S rRNA in the 30S particle. May play a critical role in biogenesis of 30S subunits. The protein is Ribosomal RNA small subunit methyltransferase A of Bacillus pumilus (strain SAFR-032).